Consider the following 787-residue polypeptide: Probable basic-leucine zipper transcription factor J (787 aa).

Low complexity predominate over residues 18–90; it reads NSNIHNNTHN…NNTQNTNNGT (73 aa). Disordered stretches follow at residues 18 to 95, 153 to 173, 186 to 306, 343 to 372, 401 to 441, and 473 to 507; these read NSNI…LTPL, LNLS…NNNP, LQSQ…NNNT, DSLL…IQTS, LSSA…NNSN, and ASSE…DEDQ. 4 stretches are compositionally biased toward low complexity: residues 186 to 223, 235 to 258, 273 to 305, and 351 to 366; these read LQSQ…SSPI, SSPI…STSP, NNNN…LNNN, and NNNN…NNNN. A compositionally biased stretch (low complexity) spans 473–483; it reads ASSESAQSESS. The 64-residue stretch at 549-612 folds into the bZIP domain; the sequence is ELKKQRRLVK…KALKKQLYSL (64 aa). The basic motif stretch occupies residues 551-603; that stretch reads KKQRRLVKNREYASQSRSRRKIYVENIETKLQKTNQDCASIKSQLNSVKEENK. The leucine-zipper stretch occupies residues 605–612; it reads LKKQLYSL. Disordered regions lie at residues 723-747 and 763-787; these read SNYI…VVST and DKEV…SPLN. A compositionally biased stretch (basic and acidic residues) spans 763–778; sequence DKEVPQKCKDSSDLKC.

The protein belongs to the bZIP family.

It localises to the nucleus. In terms of biological role, probable transcriptional regulator. The polypeptide is Probable basic-leucine zipper transcription factor J (bzpJ) (Dictyostelium discoideum (Social amoeba)).